Consider the following 288-residue polypeptide: Ion-translocating oxidoreductase complex subunit D (288 aa).

Helical transmembrane passes span 26–46 (IVAL…AALG), 47–67 (NIIA…KAFN), 80–100 (LGLL…IFIG), 101–121 (GAFA…YTFH), 126–146 (AWVF…IPIL), 159–179 (GFLT…LILV), 200–220 (VLGD…VFFI), 235–255 (IVYG…SGNY), and 256–276 (VWGT…IELK).

It belongs to the NqrB/RnfD family. The Rnf complex is probably composed of eight subunits, including RnfA, RnfB, RnfC, RnfD, RnfE and RnfG. Requires FMN as cofactor.

The protein localises to the cell membrane. In terms of biological role, part of a membrane-bound complex that couples electron transfer with translocation of ions across the membrane. Catalyzes Na(+) transport, most probably coupled to electron transfer from reduced ferredoxin to methanophenazine and heterodisulfide reductase. Involved in heterodisulfide reduction during methanogenesis from acetate. This chain is Ion-translocating oxidoreductase complex subunit D, found in Methanosarcina acetivorans (strain ATCC 35395 / DSM 2834 / JCM 12185 / C2A).